The primary structure comprises 2521 residues: Piezo-type mechanosensitive ion channel component 1 (2521 aa).

Residues 1-12 lie on the Cytoplasmic side of the membrane; that stretch reads MEPHVLGAVLYW. The chain crosses the membrane as a helical span at residues 13–25; the sequence is LLLPCALLAACLL. At 26 to 28 the chain is on the extracellular side; the sequence is RFS. A helical transmembrane segment spans residues 29–44; that stretch reads GLSLVYLLFLLLLPWF. The Cytoplasmic segment spans residues 45–58; that stretch reads PGPTRCGLQGHTGR. A helical transmembrane segment spans residues 59–81; it reads LLRALLGLSLLFLVAHLALQICL. The Extracellular segment spans residues 82 to 121; it reads HIVPRLDQLLGPSCSRWETLSRHIGVTRLDLKDIPNAIRL. The helical transmembrane segment at 122–138 threads the bilayer; sequence VAPDLGILVVSSVCLGI. Over 139 to 194 the chain is Cytoplasmic; sequence CGRLARNTRQSPHPRELDDDERDVDASPTAGLQEAATLAPTRRSRLAARFRVTAHW. Residues 195 to 214 traverse the membrane as a helical segment; it reads LLVAAGRVLAVTLLALAGIA. Topologically, residues 215–216 are extracellular; it reads HP. A helical transmembrane segment spans residues 217 to 236; sequence SALSSVYLLLFLALCTWWAC. Topologically, residues 237-247 are cytoplasmic; sequence HFPISTRGFSR. A helical membrane pass occupies residues 248 to 268; the sequence is LCVAVGCFGAGHLICLYCYQM. Residues 269–309 lie on the Extracellular side of the membrane; the sequence is PLAQALLPPAGIWARVLGLKDFVGPTNCSSPHALVLNTGLD. Asn-295 carries N-linked (GlcNAc...) asparagine glycosylation. Residues 310-330 traverse the membrane as a helical segment; sequence WPVYASPGVLLLLCYATASLR. Residues 331–417 lie on the Cytoplasmic side of the membrane; it reads KLRAYRPSGQ…EASPLHSLGH (87 aa). A helical transmembrane segment spans residues 418–438; that stretch reads LIMDQSYVCALIAMMVWSITY. Over 439–440 the chain is Extracellular; the sequence is HS. Residues 441 to 456 form a helical membrane-spanning segment; the sequence is WLTFVLLLWACLIWTV. The Cytoplasmic portion of the chain corresponds to 457 to 461; that stretch reads RSRHQ. Residues 462-484 traverse the membrane as a helical segment; sequence LAMLCSPCILLYGMTLCCLRYVW. Residues 485–512 are Extracellular-facing; the sequence is AMDLRPELPTTLGPVSLRQLGLEHTRYP. A helical transmembrane segment spans residues 513–530; sequence CLDLGAMLLYTLTFWLLL. The Cytoplasmic segment spans residues 531–574; it reads RQFVKEKLLKWAESPAALTEVTVADTEPTRTQTLLQSLGELVKG. A helical transmembrane segment spans residues 575–595; it reads VYAKYWIYVCAGMFIVVSFAG. Arg-596 is a topological domain (extracellular). A helical membrane pass occupies residues 597-617; it reads LVVYKIVYMFLFLLCLTLFQV. The Cytoplasmic segment spans residues 618–627; sequence YYSLWRKLLK. The helical transmembrane segment at 628–649 threads the bilayer; that stretch reads AFWWLVVAYTMLVLIAVYTFQF. Topologically, residues 650-679 are extracellular; it reads QDFPAYWRNLTGFTDEQLGDLGLEQFSVSE. The helical transmembrane segment at 680–696 threads the bilayer; the sequence is LFSSILVPGFFLLACIL. The Cytoplasmic segment spans residues 697–816; it reads QLHYFHRPFM…RRLLELHVFK (120 aa). A Phosphothreonine modification is found at Thr-734. The interval 738–769 is disordered; that stretch reads REEQQEHQQQQQEEEEEEEDSRDEGLGVATPH. Acidic residues predominate over residues 749-759; that stretch reads QEEEEEEEDSR. Ser-758 carries the post-translational modification Phosphoserine. A helical transmembrane segment spans residues 817–828; the sequence is LVALYTVWVALK. At 829-831 the chain is on the extracellular side; it reads EVS. The chain crosses the membrane as a helical span at residues 832–845; it reads VMNLLLVVLWAFAL. The Cytoplasmic portion of the chain corresponds to 846–859; sequence PYPRFRPMASCLST. Residues 860 to 874 form a helical membrane-spanning segment; sequence VWTCVIIVCKMLYQL. The Extracellular portion of the chain corresponds to 875–926; it reads KVVNPQEYSSNCTEPFPNSTNLLPTEISQSLLYRGPVDPANWFGVRKGFPNL. A helical transmembrane segment spans residues 927–954; the sequence is GYIQNHLQVLLLLVFEAIVYRRQEHYRR. Topologically, residues 955–994 are cytoplasmic; that stretch reads QHQLAPLPAQAVFASGTRQQLDQDLLGCLKYFINFFFYKF. Residues 995–1010 form a helical membrane-spanning segment; it reads GLEICFLMAVNVIGQR. Residues 1011–1012 are Extracellular-facing; sequence MN. Residues 1013-1028 form a helical membrane-spanning segment; the sequence is FLVTLHGCWLVAILTR. At 1029–1041 the chain is on the cytoplasmic side; the sequence is RHRQAIARLWPNY. A helical membrane pass occupies residues 1042-1057; it reads CLFLALFLLYQYLLCL. Over 1058–1096 the chain is Extracellular; the sequence is GMPPALCIDYPWRWSRAVPMNSALIKWLYLPDFFRAPNS. Residues 1097–1118 traverse the membrane as a helical segment; sequence TNLISDFLLLLCASQQWQVFSA. The Cytoplasmic segment spans residues 1119–1153; that stretch reads ERTEEWQRMAGVNTDRLEPLRGEPNPVPNFIHCRS. The chain crosses the membrane as a helical span at residues 1154–1180; sequence YLDMLKVAVFRYLFWLVLVVVFVTGAT. At 1181–1185 the chain is on the extracellular side; sequence RISIF. Residues 1186-1204 traverse the membrane as a helical segment; the sequence is GLGYLLACFYLLLFGTALL. Topologically, residues 1205–1217 are cytoplasmic; that stretch reads QRDTRARLVLWDC. Residues 1218–1236 traverse the membrane as a helical segment; the sequence is LILYNVTVIISKNMLSLLA. Topologically, residues 1237–1285 are extracellular; that stretch reads CVFVEQMQTGFCWVIQLFSLVCTVKGYYDPKEMMDRDQDCLLPVEEAGI. Residues 1286-1302 traverse the membrane as a helical segment; it reads IWDSVCFFFLLLQRRVF. Over 1303–1656 the chain is Cytoplasmic; that stretch reads LSHYYLHVRA…ELLLDRRLRI (354 aa). The stretch at 1339–1368 forms a coiled coil; the sequence is HRRIEEKSLAQLKRQMERIRAKQEKHRQGR. Disordered stretches follow at residues 1356-1402, 1462-1498, and 1576-1630; these read RIRA…RRQW, RQQEQEQARQEQAGQLPTGGGPSQEVEPAEGPEEAAA, and TLPG…DPGE. A compositionally biased stretch (low complexity) spans 1385–1398; sequence LEPGPDSPGGSSPP. A phosphoserine mark is found at Ser-1391 and Ser-1396. Phosphoserine is present on residues Ser-1636 and Ser-1646. Residues 1657 to 1700 form a helical membrane-spanning segment; the sequence is PELEEAELFAEGQGRALRLLRAVYQCVAAHSELLCYFIIILNHM. Topologically, residues 1701 to 1704 are extracellular; it reads VTAS. Residues 1705 to 1720 traverse the membrane as a helical segment; that stretch reads AGSLVLPVLVFLWAML. The Cytoplasmic segment spans residues 1721-1728; it reads SIPRPSKR. The helical transmembrane segment at 1729–1747 threads the bilayer; sequence FWMTAIVFTEIAVVVKYLF. Residues 1748 to 1779 are Extracellular-facing; that stretch reads QFGFFPWNSHVVLRRYENKPYFPPRILGLEKT. A helical transmembrane segment spans residues 1780 to 1801; the sequence is DGYIKYDLVQLMALFFHRSQLL. Residues 1802–1960 are Cytoplasmic-facing; sequence CYGLWDHEED…HTKYRAATDV (159 aa). A compositionally biased stretch (basic and acidic residues) spans 1811–1822; that stretch reads DSPSKEHDKSGE. The segment at 1811 to 1921 is disordered; sequence DSPSKEHDKS…RPSRSGGRVR (111 aa). A Phosphothreonine modification is found at Thr-1854. Basic and acidic residues predominate over residues 1859-1868; it reads VELRPRDTRR. The span at 1869-1878 shows a compositional bias: basic residues; the sequence is ISLRFRRRKK. A compositionally biased stretch (acidic residues) spans 1890–1903; that stretch reads EAEDREEEEGEEEK. The segment covering 1904–1913 has biased composition (basic and acidic residues); the sequence is EAPTGREKRP. The chain crosses the membrane as a helical span at residues 1961-1980; the sequence is YALMFLADVVDFIIIIFGFW. The Extracellular segment spans residues 1981–2000; it reads AFGKHSAATDITSSLSDDQV. A helical transmembrane segment spans residues 2001-2017; the sequence is PEAFLVMLLIQFSTMVV. At 2018 to 2031 the chain is on the cytoplasmic side; that stretch reads DRALYLRKTVLGKL. Residues 2032–2052 form a helical membrane-spanning segment; that stretch reads AFQVALVLAIHLWMFFILPAV. Topologically, residues 2053–2060 are extracellular; sequence TERMFNQN. A helical membrane pass occupies residues 2061–2076; the sequence is VVAQLWYFVKCIYFAL. The Cytoplasmic portion of the chain corresponds to 2077 to 2176; the sequence is SAYQIRCGYP…KKKIVKYGMG (100 aa). A helical transmembrane segment spans residues 2177-2197; that stretch reads GLIILFLIAIIWFPLLFMSLV. Over 2198-2431 the chain is Extracellular; it reads RSVVGVVNQP…IFSDKVSPPS (234 aa). N-linked (GlcNAc...) asparagine glycosylation occurs at Asn-2294. Residues Cys-2411 and Cys-2415 are joined by a disulfide bond. A helical membrane pass occupies residues 2432–2452; it reads LGFLAGYGIMGLYVSIVLVIG. Residues 2453–2521 are Cytoplasmic-facing; the sequence is KFVRGFFSEI…TMIKWTREKE (69 aa).

This sequence belongs to the PIEZO (TC 1.A.75) family. Homotrimer; the homotrimer forms a propeller-shaped Piezo channel with a cation-ion conducting pore. Heterotrimeric interaction may occur between PIEZO1 and PIEZO2. Interacts with PKD2. Interacts with STOML3. Interacts with TMC1, TMC2, PCDH15 and CIB2; the interaction may be part of the MET complex. Interacts with MDFIC (via C-terminus); the interaction prolongs Piezo channel inactivation. Interacts with MDFI (via C-terminus); the interaction prolongs Piezo channel inactivation. Expressed in numerous tissues. In normal brain, expressed exclusively in neurons, not in astrocytes. In Alzheimer disease brains, expressed in about half of the activated astrocytes located around classical senile plaques. In Parkinson disease substantia nigra, not detected in melanin-containing neurons nor in activated astrocytes. Expressed in erythrocytes (at protein level). Expressed in myoblasts (at protein level).

The protein resides in the endoplasmic reticulum membrane. The protein localises to the endoplasmic reticulum-Golgi intermediate compartment membrane. It localises to the cell membrane. Its subcellular location is the cell projection. It is found in the lamellipodium membrane. It catalyses the reaction K(+)(in) = K(+)(out). It carries out the reaction Na(+)(in) = Na(+)(out). The enzyme catalyses Ca(2+)(in) = Ca(2+)(out). The catalysed reaction is Mg(2+)(in) = Mg(2+)(out). Its activity is regulated as follows. Regulated by auxillary subunits MDFIC and MDFI. Down-regulated by phosphatidylserines exposed on the cell surface. Divalent ions decrease the single-channel permeability of K(+). In terms of biological role, pore-forming subunit of the mechanosensitive non-specific cation Piezo channel required for rapidly adapting mechanically activated (MA) currents and has a key role in sensing touch and tactile pain. Piezo channels are homotrimeric three-blade propeller-shaped structures that utilize a cap-motion and plug-and-latch mechanism to gate their ion-conducting pathways. Generates currents characterized by a linear current-voltage relationship that are sensitive to ruthenium red and gadolinium. Conductance to monovalent alkali ions is highest for K(+), intermediate for Na(+) and lowest for Li(+). Divalent ions except for Mn(2+) permeate the channel but more slowly than the monovalent ions and they also reduce K(+) currents. Plays a key role in epithelial cell adhesion by maintaining integrin activation through R-Ras recruitment to the ER, most probably in its activated state, and subsequent stimulation of calpain signaling. In inner ear hair cells, PIEZO1/2 subunits may constitute part of the mechanotransducer (MET) non-selective cation channel complex where they may act as pore-forming ion-conducting component in the complex. In the kidney, may contribute to the detection of intraluminal pressure changes and to urine flow sensing. Acts as a shear-stress sensor that promotes endothelial cell organization and alignment in the direction of blood flow through calpain activation. Plays a key role in blood vessel formation and vascular structure in both development and adult physiology. Acts as a sensor of phosphatidylserine (PS) flipping at the plasma membrane and governs morphogenesis of muscle cells. In myoblasts, flippase-mediated PS enrichment at the inner leaflet of plasma membrane triggers channel activation and Ca2+ influx followed by Rho GTPases signal transduction, leading to assembly of cortical actomyosin fibers and myotube formation. This chain is Piezo-type mechanosensitive ion channel component 1, found in Homo sapiens (Human).